A 382-amino-acid chain; its full sequence is 1-deoxy-D-xylulose 5-phosphate reductoisomerase (382 aa).

NADPH is bound by residues Thr-11, Gly-12, Ser-13, Ile-14, and Asn-123. Lys-124 contacts 1-deoxy-D-xylulose 5-phosphate. Glu-125 contacts NADPH. Asp-149 serves as a coordination point for Mn(2+). 1-deoxy-D-xylulose 5-phosphate-binding residues include Ser-150, Glu-151, Ser-173, and His-196. Glu-151 serves as a coordination point for Mn(2+). Gly-202 contacts NADPH. Residues Ser-209, Asn-214, Lys-215, and Glu-218 each contribute to the 1-deoxy-D-xylulose 5-phosphate site. Glu-218 contacts Mn(2+).

The protein belongs to the DXR family. Mg(2+) serves as cofactor. Requires Mn(2+) as cofactor.

It catalyses the reaction 2-C-methyl-D-erythritol 4-phosphate + NADP(+) = 1-deoxy-D-xylulose 5-phosphate + NADPH + H(+). It participates in isoprenoid biosynthesis; isopentenyl diphosphate biosynthesis via DXP pathway; isopentenyl diphosphate from 1-deoxy-D-xylulose 5-phosphate: step 1/6. Functionally, catalyzes the NADPH-dependent rearrangement and reduction of 1-deoxy-D-xylulose-5-phosphate (DXP) to 2-C-methyl-D-erythritol 4-phosphate (MEP). This Phocaeicola vulgatus (strain ATCC 8482 / DSM 1447 / JCM 5826 / CCUG 4940 / NBRC 14291 / NCTC 11154) (Bacteroides vulgatus) protein is 1-deoxy-D-xylulose 5-phosphate reductoisomerase.